We begin with the raw amino-acid sequence, 88 residues long: Large ribosomal subunit protein eL31 (88 aa).

This sequence belongs to the eukaryotic ribosomal protein eL31 family.

This chain is Large ribosomal subunit protein eL31 (rpl31e), found in Archaeoglobus fulgidus (strain ATCC 49558 / DSM 4304 / JCM 9628 / NBRC 100126 / VC-16).